The primary structure comprises 184 residues: ATP synthase subunit delta (184 aa).

The protein belongs to the ATPase delta chain family. F-type ATPases have 2 components, F(1) - the catalytic core - and F(0) - the membrane proton channel. F(1) has five subunits: alpha(3), beta(3), gamma(1), delta(1), epsilon(1). CF(0) has four main subunits: a(1), b(1), b'(1) and c(10-14). The alpha and beta chains form an alternating ring which encloses part of the gamma chain. F(1) is attached to F(0) by a central stalk formed by the gamma and epsilon chains, while a peripheral stalk is formed by the delta, b and b' chains.

The protein localises to the cellular thylakoid membrane. Its function is as follows. F(1)F(0) ATP synthase produces ATP from ADP in the presence of a proton or sodium gradient. F-type ATPases consist of two structural domains, F(1) containing the extramembraneous catalytic core and F(0) containing the membrane proton channel, linked together by a central stalk and a peripheral stalk. During catalysis, ATP synthesis in the catalytic domain of F(1) is coupled via a rotary mechanism of the central stalk subunits to proton translocation. This protein is part of the stalk that links CF(0) to CF(1). It either transmits conformational changes from CF(0) to CF(1) or is implicated in proton conduction. The chain is ATP synthase subunit delta from Nostoc punctiforme (strain ATCC 29133 / PCC 73102).